A 396-amino-acid chain; its full sequence is E3 ubiquitin-protein ligase NHLRC1 (396 aa).

The segment at 23-69 (CKVCFERFGHRQQRRPRNLPCGHVVCLACVAALAHPRTLALECPFCR) adopts an RING-type zinc-finger fold. NHL repeat units follow at residues 110–154 (ALTC…FDSG), 158–201 (AHQF…FDFF), 202–242 (GQIK…LEAD), 245–298 (EGVL…FNSS), 299–347 (MQLI…LGKP), and 348–391 (EEFP…FKVM).

Interacts with AGL. Interacts (via the NHL repeats) with EPM2A/laforin. Forms a complex with EPM2A/laforin and HSP70.

It localises to the endoplasmic reticulum. Its subcellular location is the nucleus. The enzyme catalyses S-ubiquitinyl-[E2 ubiquitin-conjugating enzyme]-L-cysteine + [acceptor protein]-L-lysine = [E2 ubiquitin-conjugating enzyme]-L-cysteine + N(6)-ubiquitinyl-[acceptor protein]-L-lysine.. The protein operates within protein modification; protein ubiquitination. Its function is as follows. E3 ubiquitin-protein ligase. Together with the phosphatase EPM2A/laforin, appears to be involved in the clearance of toxic polyglucosan and protein aggregates via multiple pathways. In complex with EPM2A/laforin and HSP70, suppresses the cellular toxicity of misfolded proteins by promoting their degradation through the ubiquitin-proteasome system (UPS). Ubiquitinates the glycogen-targeting protein phosphatase subunits PPP1R3C/PTG and PPP1R3D in a laforin-dependent manner and targets them for proteasome-dependent degradation, thus decreasing glycogen accumulation. Polyubiquitinates EPM2A/laforin and ubiquitinates AGL and targets them for proteasome-dependent degradation. Also promotes proteasome-independent protein degradation through the macroautophagy pathway. This is E3 ubiquitin-protein ligase NHLRC1 (Nhlrc1) from Rattus norvegicus (Rat).